We begin with the raw amino-acid sequence, 740 residues long: Phosphoribosylformylglycinamidine synthase subunit PurL (740 aa).

His-49 is an active-site residue. Residues Tyr-52 and Lys-91 each coordinate ATP. Position 93 (Glu-93) interacts with Mg(2+). Substrate contacts are provided by residues 94-97 (SHNH) and Arg-116. His-95 acts as the Proton acceptor in catalysis. Residue Asp-117 participates in Mg(2+) binding. Gln-245 serves as a coordination point for substrate. Residue Asp-273 participates in Mg(2+) binding. Residue 317-319 (ESQ) participates in substrate binding. Residues Asp-501 and Gly-538 each coordinate ATP. Asn-539 is a Mg(2+) binding site. Ser-541 is a binding site for substrate.

It belongs to the FGAMS family. Monomer. Part of the FGAM synthase complex composed of 1 PurL, 1 PurQ and 2 PurS subunits.

The protein resides in the cytoplasm. The catalysed reaction is N(2)-formyl-N(1)-(5-phospho-beta-D-ribosyl)glycinamide + L-glutamine + ATP + H2O = 2-formamido-N(1)-(5-O-phospho-beta-D-ribosyl)acetamidine + L-glutamate + ADP + phosphate + H(+). It functions in the pathway purine metabolism; IMP biosynthesis via de novo pathway; 5-amino-1-(5-phospho-D-ribosyl)imidazole from N(2)-formyl-N(1)-(5-phospho-D-ribosyl)glycinamide: step 1/2. Functionally, part of the phosphoribosylformylglycinamidine synthase complex involved in the purines biosynthetic pathway. Catalyzes the ATP-dependent conversion of formylglycinamide ribonucleotide (FGAR) and glutamine to yield formylglycinamidine ribonucleotide (FGAM) and glutamate. The FGAM synthase complex is composed of three subunits. PurQ produces an ammonia molecule by converting glutamine to glutamate. PurL transfers the ammonia molecule to FGAR to form FGAM in an ATP-dependent manner. PurS interacts with PurQ and PurL and is thought to assist in the transfer of the ammonia molecule from PurQ to PurL. The protein is Phosphoribosylformylglycinamidine synthase subunit PurL of Sulfurovum sp. (strain NBC37-1).